The chain runs to 132 residues: Peptide methionine sulfoxide reductase MsrB (132 aa).

Residues 8-130 form the MsrB domain; that stretch reads LDSWREELTE…NSASLKLVPR (123 aa). Residues Cys47, Cys50, Cys96, and Cys99 each coordinate Zn(2+). Cys119 acts as the Nucleophile in catalysis.

The protein belongs to the MsrB Met sulfoxide reductase family. It depends on Zn(2+) as a cofactor.

It carries out the reaction L-methionyl-[protein] + [thioredoxin]-disulfide + H2O = L-methionyl-(R)-S-oxide-[protein] + [thioredoxin]-dithiol. The polypeptide is Peptide methionine sulfoxide reductase MsrB (Pseudomonas aeruginosa (strain UCBPP-PA14)).